A 151-amino-acid chain; its full sequence is Putative pre-16S rRNA nuclease (151 aa).

The protein belongs to the YqgF nuclease family.

It is found in the cytoplasm. Functionally, could be a nuclease involved in processing of the 5'-end of pre-16S rRNA. This chain is Putative pre-16S rRNA nuclease, found in Bifidobacterium adolescentis (strain ATCC 15703 / DSM 20083 / NCTC 11814 / E194a).